The primary structure comprises 88 residues: Alkene monooxygenase system, oxygenase component subunit gamma (88 aa).

It belongs to the TmoB/XamoB family. In terms of assembly, the alkene monooxygenase multicomponent enzyme system is composed of an electron transfer component and a monooxygenase component interacting with the effector protein XamoD. The electron transfer component is composed of a ferredoxin reductase (XamoF) and a ferredoxin (XamoC), and the monooxygenase component is formed by a heterohexamer (dimer of heterotrimers) of two alpha subunits (XamoA), two beta subunits (XamoE) and two gamma subunits (XamoB).

It is found in the cytoplasm. It carries out the reaction propene + NADH + O2 + H(+) = 1,2-epoxypropane + NAD(+) + H2O. With respect to regulation, inhibited by propyne. Its function is as follows. Component of the alkene monooxygenase multicomponent enzyme system which catalyzes the O2- and NADH-dependent epoxidation of short chain (C2 to C6) alkenes to their corresponding epoxides. Also able to catalyze the oxidation of a number of chlorinated alkenes, including trichloroethylene, cis- and trans-1,2-dichloroethylene, vinyl chloride, 1-chloropropylene, 1,3-dichloropropylene and 2,3-dichloropropylene. This is Alkene monooxygenase system, oxygenase component subunit gamma from Xanthobacter autotrophicus (strain ATCC BAA-1158 / Py2).